Here is a 60-residue protein sequence, read N- to C-terminus: Large ribosomal subunit protein bL32 (60 aa).

It belongs to the bacterial ribosomal protein bL32 family.

The sequence is that of Large ribosomal subunit protein bL32 from Streptococcus pneumoniae serotype 4 (strain ATCC BAA-334 / TIGR4).